The sequence spans 105 residues: MYVIVEINGQQFKAEEGKKLFVHHIQNAENGATVEFEKVLLVDNNGTVTVGAPTVEGAKVVCEVVSPLVKGDKVLVFHKKRRKGYRKLNGHRQQFTELTIKQVIA.

The protein belongs to the bacterial ribosomal protein bL21 family. Part of the 50S ribosomal subunit. Contacts protein L20.

Its function is as follows. This protein binds to 23S rRNA in the presence of protein L20. This is Large ribosomal subunit protein bL21 from Phocaeicola vulgatus (strain ATCC 8482 / DSM 1447 / JCM 5826 / CCUG 4940 / NBRC 14291 / NCTC 11154) (Bacteroides vulgatus).